The primary structure comprises 641 residues: 1-deoxy-D-xylulose-5-phosphate synthase (641 aa).

Residues H71 and 112 to 114 contribute to the thiamine diphosphate site; that span reads SHA. Mg(2+) is bound at residue D144. Residues 145 to 146, N174, Y285, and E366 each bind thiamine diphosphate; that span reads GA. N174 provides a ligand contact to Mg(2+).

This sequence belongs to the transketolase family. DXPS subfamily. In terms of assembly, homodimer. Mg(2+) is required as a cofactor. Requires thiamine diphosphate as cofactor.

It carries out the reaction D-glyceraldehyde 3-phosphate + pyruvate + H(+) = 1-deoxy-D-xylulose 5-phosphate + CO2. It functions in the pathway metabolic intermediate biosynthesis; 1-deoxy-D-xylulose 5-phosphate biosynthesis; 1-deoxy-D-xylulose 5-phosphate from D-glyceraldehyde 3-phosphate and pyruvate: step 1/1. In terms of biological role, catalyzes the acyloin condensation reaction between C atoms 2 and 3 of pyruvate and glyceraldehyde 3-phosphate to yield 1-deoxy-D-xylulose-5-phosphate (DXP). This Mycobacteroides abscessus (strain ATCC 19977 / DSM 44196 / CCUG 20993 / CIP 104536 / JCM 13569 / NCTC 13031 / TMC 1543 / L948) (Mycobacterium abscessus) protein is 1-deoxy-D-xylulose-5-phosphate synthase.